We begin with the raw amino-acid sequence, 1026 residues long: Contactin-4 (1026 aa).

The signal sequence occupies residues Met1–Ala18. Ig-like C2-type domains are found at residues Pro32–Gln117, Asp122–Gly207, Pro225–Thr311, Pro316–Ser400, Pro406–Val493, and Pro497–Ser586. Disulfide bonds link Cys50-Cys100, Cys144-Cys194, Cys247-Cys295, Cys337-Cys384, Cys429-Cys477, and Cys519-Cys576. 3 N-linked (GlcNAc...) asparagine glycosylation sites follow: Asn65, Asn90, and Asn191. N-linked (GlcNAc...) asparagine glycans are attached at residues Asn370, Asn375, and Asn466. Fibronectin type-III domains lie at Pro599–Ala697, Thr702–Glu799, Pro804–Pro899, and Pro900–Ala995. The tract at residues Pro685 to Gly710 is disordered. Positions Arg687 to Glu696 are enriched in basic and acidic residues. N-linked (GlcNAc...) asparagine glycans are attached at residues Asn705, Asn764, Asn858, Asn893, Asn911, Asn929, and Asn954. A compositionally biased stretch (polar residues) spans Gly886 to Thr896. The interval Gly886–Asn907 is disordered. The GPI-anchor amidated serine moiety is linked to residue Ser1000. A propeptide spans Gly1001 to Leu1026 (removed in mature form).

It belongs to the immunoglobulin superfamily. Contactin family. As to quaternary structure, interacts with PTPRG. In terms of tissue distribution, mainly expressed in brain. Highly expressed in cerebellum and weakly expressed in corpus callosum, caudate nucleus, amygdala and spinal cord. Also expressed in testis, pancreas, thyroid, uterus, small intestine and kidney. Not expressed in skeletal muscle. Isoform 2 is weakly expressed in cerebral cortex.

The protein localises to the cell membrane. The protein resides in the secreted. Functionally, contactins mediate cell surface interactions during nervous system development. Has some neurite outgrowth-promoting activity. May be involved in synaptogenesis. The protein is Contactin-4 (CNTN4) of Homo sapiens (Human).